Reading from the N-terminus, the 235-residue chain is MPSKRKRNPLQYQTSGSLDEETNQRSAFPQIDNNSASESLEYDIPLDGLDYLATVREEARKLVPFVAARREPETRETIPLRKLEIEAGKKSFDPFLRYLLNIIDKEGERLEQYMESSSLDASILPKNLQQWRVYIEHKAPCWAILAVVDLATVLEILESLSSWLEKDAIDLQSQWIFCFCYKLPELLNGEDISTLRSVLKSLRSTHTSFPALQMSASALQAVLVYRYGQKDLFQT.

The interval 1 to 34 is disordered; the sequence is MPSKRKRNPLQYQTSGSLDEETNQRSAFPQIDNN. A compositionally biased stretch (polar residues) spans 24 to 34; it reads QRSAFPQIDNN. 2 positions are modified to phosphoserine: serine 117 and serine 118.

Belongs to the gemin-2 family. Part of the core SMN complex at least composed of smn1, yip11/gem2, gem6, gem7 and gem8. Interacts with smn1; the interaction is direct.

Its subcellular location is the nucleus. Functionally, the SMN complex catalyzes the assembly of small nuclear ribonucleoproteins (snRNPs), the building blocks of the spliceosome, and thereby plays an important role in the splicing of cellular pre-mRNAs. Most spliceosomal snRNPs contain a common set of Sm proteins smb1, smd1, smd2, smd3, sme1, smf1 and smg1 that assemble in a heptameric protein ring on the Sm site of the small nuclear RNA to form the core snRNP. In the cytosol, the Sm proteins smd1, smd2, sme1, smf1 and smg1 (5Sm) are trapped in an inactive 6S pICln-Sm complex by the chaperone saf5. To complete assembly of core snRNPs, the SMN complex accepts 5Sm from saf5. Binding of snRNA inside 5Sm ultimately triggers eviction of the SMN complex, thereby allowing binding of smd3 and smb1 to complete assembly of the core snRNP. Within the SMN complex, yip11/gem2 constrains the conformation of 5Sm, thereby promoting 5Sm binding to snRNA containing the snRNP code (a nonameric Sm site and a 3'-adjacent stem-loop), thus preventing progression of assembly until a cognate substrate is bound. The protein is SMN complex subunit yip11/gem2 (yip11) of Schizosaccharomyces pombe (strain 972 / ATCC 24843) (Fission yeast).